The following is a 1054-amino-acid chain: Disks large-associated protein 2 (1054 aa).

Disordered stretches follow at residues 32-87 (EPEE…SGSR) and 242-301 (SHSL…SDDN). The span at 242–255 (SHSLEGSSKSNANG) shows a compositional bias: polar residues. A compositionally biased stretch (basic residues) spans 267-281 (HAHHAKHSKRSKSKE). Residues 289–299 (RPGMSSWWSSD) show a composition bias toward low complexity. Residues Ser298, Ser304, Ser386, and Ser452 each carry the phosphoserine modification. Disordered regions lie at residues 442–464 (GDEE…ILPE) and 609–666 (YKKT…TDSL). The segment covering 628–641 (VTAQSSTESTQDAY) has biased composition (polar residues). A phosphoserine mark is found at Ser662, Ser665, Ser668, and Ser715. The interval 719-746 (QDSEFPEHQPYPRSDVETATDSDTESRG) is disordered. Thr738 carries the post-translational modification Phosphothreonine. 5 positions are modified to phosphoserine: Ser740, Ser771, Ser806, Ser978, and Ser1007. Composition is skewed to basic and acidic residues over residues 977–987 (ESPERKEERKV) and 1002–1020 (ITRE…EARR). The segment at 977–1021 (ESPERKEERKVPPPIPKKPPKGKFPITREKSLDLPDRQRQEARRR) is disordered.

It belongs to the SAPAP family. As to quaternary structure, interacts with DLG1 and DLG4/PSD-95. Expressed in brain and kidney.

The protein resides in the cell membrane. The protein localises to the postsynaptic density. It localises to the synapse. Its function is as follows. May play a role in the molecular organization of synapses and neuronal cell signaling. Could be an adapter protein linking ion channel to the subsynaptic cytoskeleton. May induce enrichment of PSD-95/SAP90 at the plasma membrane. This is Disks large-associated protein 2 from Homo sapiens (Human).